We begin with the raw amino-acid sequence, 1268 residues long: Vigilin (1268 aa).

The residue at position 2 (serine 2) is an N-acetylserine. Threonine 8 is modified (phosphothreonine). Phosphoserine occurs at positions 11, 31, and 35. 7 consecutive KH domains span residues 150–212 (QASA…RHEV), 222–284 (RAVK…VARI), 295–357 (TTTI…LTEV), 364–424 (FTVS…QEQI), 435–497 (MDYV…KREL), 507–570 (ERTK…TKYM), and 581–643 (SYSI…RSRI). 2 positions are modified to phosphothreonine: threonine 295 and threonine 296. Phosphoserine is present on serine 317. Phosphotyrosine is present on tyrosine 437. Serine 645 is subject to Phosphoserine. KH domains follow at residues 653 to 716 (IAEV…KKQL), 727 to 790 (SFTV…QKEL), 800 to 863 (VVED…KKRI), 873 to 967 (QVTL…KEAL), 972 to 1034 (PVTI…KAGL), 1052 to 1117 (SFKL…RDAI), and 1127 to 1190 (MVSE…IDHI). The disordered stretch occupies residues 910–946 (PDREENPVHSVEPSIQENGDEAGEGREAKETDPGSPR). Over residues 932-946 (GEGREAKETDPGSPR) the composition is skewed to basic and acidic residues. Lysine 991 is subject to N6-acetyllysine. Positions 1214 to 1268 (PAHEESKAPSKGFVVRDAPWTSNSSEKAPDMSSSEEIPTFGAQVAPKTLPWGPKR) are disordered. Polar residues predominate over residues 1233–1249 (WTSNSSEKAPDMSSSEE). Serine 1247 carries the post-translational modification Phosphoserine.

The protein resides in the cytoplasm. It localises to the nucleus. Appears to play a role in cell sterol metabolism. It may function to protect cells from over-accumulation of cholesterol. The sequence is that of Vigilin (Hdlbp) from Rattus norvegicus (Rat).